The chain runs to 278 residues: Urease accessory protein UreD (278 aa).

Belongs to the UreD family. UreD, UreF and UreG form a complex that acts as a GTP-hydrolysis-dependent molecular chaperone, activating the urease apoprotein by helping to assemble the nickel containing metallocenter of UreC. The UreE protein probably delivers the nickel.

Its subcellular location is the cytoplasm. Required for maturation of urease via the functional incorporation of the urease nickel metallocenter. In Staphylococcus aureus (strain JH1), this protein is Urease accessory protein UreD.